The chain runs to 168 residues: Mediator of RNA polymerase II transcription subunit 11 (168 aa).

The disordered stretch occupies residues 126 to 168 (ETLENESNNEIQPKTESDTNQVETNENGNDINNKESEDIEMKE). A compositionally biased stretch (polar residues) spans 130-156 (NESNNEIQPKTESDTNQVETNENGNDI). The segment covering 157–168 (NNKESEDIEMKE) has biased composition (basic and acidic residues).

It belongs to the Mediator complex subunit 11 family. In terms of assembly, component of the Mediator complex.

It is found in the nucleus. Functionally, component of the Mediator complex, a coactivator involved in the regulated transcription of nearly all RNA polymerase II-dependent genes. Mediator functions as a bridge to convey information from gene-specific regulatory proteins to the basal RNA polymerase II transcription machinery. Mediator is recruited to promoters by direct interactions with regulatory proteins and serves as a scaffold for the assembly of a functional pre-initiation complex with RNA polymerase II and the general transcription factors. In Candida albicans (strain SC5314 / ATCC MYA-2876) (Yeast), this protein is Mediator of RNA polymerase II transcription subunit 11 (MED11).